The following is a 284-amino-acid chain: Trimeric intracellular cation channel type B-B (284 aa).

Residues 1–15 (MESLSEVSVQFSQLS) lie on the Lumenal side of the membrane. Residues 16 to 32 (MFPFFDMAHYLASVMSA) form a helical membrane-spanning segment. Topologically, residues 33-44 (REQAGALDIASH) are cytoplasmic. The chain crosses the membrane as a helical span at residues 45–68 (SPMASWFSAMLHCFGGGILSSILL). The Lumenal segment spans residues 69 to 79 (AEPPVGILANT). The helical transmembrane segment at 80–99 (TNIMLASAIWYMVYYFPYDL) threads the bilayer. At 100 to 102 (FYN) the chain is on the cytoplasmic side. The helical transmembrane segment at 103 to 121 (CFFFLPIRLIAAGMKEVTR) threads the bilayer. A 1,2-diacyl-sn-glycero-3-phospho-(1D-myo-inositol-4,5-bisphosphate) contacts are provided by lysine 117 and arginine 121. At 122–139 (TWKILSGITHAHSHYKDA) the chain is on the lumenal side. The helical transmembrane segment at 140–157 (WLVMITIGWARGAGGGLI) threads the bilayer. The Cytoplasmic portion of the chain corresponds to 158–178 (SNFEQLVRGVWKPESNEFLKM). Residues 179–196 (SYPVKVTLIGAVLFTLQH) traverse the membrane as a helical segment. Residues 197–204 (GHYLPISR) lie on the Lumenal side of the membrane. A helical membrane pass occupies residues 205–225 (HNLMFIYTMFLVSIKVTMMLT). The Cytoplasmic portion of the chain corresponds to 226 to 284 (HSAGSPFLPLETPLHRILFGLRQNQAEVRESPSSSGAKGKPSKKTLDKDSGEQSNKKDK). The tract at residues 250 to 284 (QAEVRESPSSSGAKGKPSKKTLDKDSGEQSNKKDK) is disordered. A compositionally biased stretch (basic and acidic residues) spans 269–284 (KTLDKDSGEQSNKKDK).

This sequence belongs to the TMEM38 family. In terms of assembly, homotrimer; conformation seems to be controled by binding to diacylglycerol (DAG).

The protein localises to the endoplasmic reticulum membrane. The catalysed reaction is K(+)(in) = K(+)(out). Its activity is regulated as follows. Channel activity is activated by increased cytosolic Ca(2+) levels and blocked by luminal high Ca(2+) levels. In terms of biological role, intracellular monovalent cation channel required for maintenance of rapid intracellular calcium release. Acts as a potassium counter-ion channel that functions in synchronization with calcium release from intracellular stores. Activated by increased cytosolic Ca(2+) levels. This Xenopus laevis (African clawed frog) protein is Trimeric intracellular cation channel type B-B (tmem38b-b).